The sequence spans 394 residues: GDNF family receptor alpha-like (394 aa).

The first 19 residues, 1–19, serve as a signal peptide directing secretion; the sequence is MLVFIFLAVRLSSENESSS. The Extracellular segment spans residues 20 to 350; sequence QTNDCAYFMR…LTGFNSPFSG (331 aa). 3 N-linked (GlcNAc...) asparagine glycosylation sites follow: N65, N101, and N115. Cystine bridges form between C132-C190, C139-C145, C156-C168, C163-C211, C192-C199, C221-C292, C228-C234, C245-C276, C253-C259, C270-C317, and C294-C305. Positions 150 to 229 are required for interaction with GDF15; that stretch reads ALYLKACTAN…TCLSVIHTCR (80 aa). A helical transmembrane segment spans residues 351–371; that stretch reads ELIYVVVCMVVTSGILSLVML. Residues 372–394 are Cytoplasmic-facing; the sequence is KLRIPSKKRDPAPIEIAGAVIIQ.

Belongs to the GDNFR family. In terms of assembly, interacts (via the extracellular domain) with GDF15 and RET; receptor of GDF15, mediates cellular signaling through interaction with RET after GDF15-binding. Interaction with RET requires previous GDF15-binding. Cleaved and inactivated by MMP14, inhibiting the GDF15-GFRAL aversive response. Expressed in the brainstem, restricted to cells in the area postrema and the immediately adjacent region of the nucleus tractus solitarius. Detected at low levels in testis.

The protein localises to the cell membrane. Brainstem-restricted receptor for GDF15 hormone, which triggers an aversive response, characterized by nausea, vomiting, and/or loss of appetite in response to various stresses. The aversive response is both required to reduce continuing exposure to those stresses at the time of exposure and to promote avoidance behavior in the future. The GDF15-GFRAL aversive response is triggered by stresses, such as anticancer drugs (camptothecin or cisplatin), cancers or drugs such as metformin. Upon interaction with its ligand, GDF15, mediates the GDF15-induced autophosphorylation and activation of the RET tyrosine kinase receptor, leading to activation of MAPK- and AKT- signaling pathways. Ligand-binding activates GFRAL-expressing neurons localized in the area postrema and nucleus tractus solitarius of the brainstem. The GDF15-GFRAL signal induces expression of genes involved in metabolism, such as lipid metabolism in adipose tissues. This is GDNF family receptor alpha-like from Rattus norvegicus (Rat).